The sequence spans 89 residues: Small ribosomal subunit protein uS15 (89 aa).

It belongs to the universal ribosomal protein uS15 family. Part of the 30S ribosomal subunit. Forms a bridge to the 50S subunit in the 70S ribosome, contacting the 23S rRNA.

Its function is as follows. One of the primary rRNA binding proteins, it binds directly to 16S rRNA where it helps nucleate assembly of the platform of the 30S subunit by binding and bridging several RNA helices of the 16S rRNA. Functionally, forms an intersubunit bridge (bridge B4) with the 23S rRNA of the 50S subunit in the ribosome. In Geobacillus thermodenitrificans (strain NG80-2), this protein is Small ribosomal subunit protein uS15.